A 270-amino-acid chain; its full sequence is Fructose-2,6-bisphosphatase TIGAR (270 aa).

The Tele-phosphohistidine intermediate role is filled by H11. K50 is subject to N6-acetyllysine. E89 (proton donor/acceptor) is an active-site residue.

Belongs to the phosphoglycerate mutase family. As to quaternary structure, interacts with HK2; the interaction increases hexokinase HK2 activity in a hypoxia- and HIF1A-dependent manner, resulting in the regulation of mitochondrial membrane potential, thus increasing NADPH production and decreasing intracellular ROS levels.

It is found in the cytoplasm. The protein localises to the nucleus. The protein resides in the mitochondrion. It catalyses the reaction beta-D-fructose 2,6-bisphosphate + H2O = beta-D-fructose 6-phosphate + phosphate. Its function is as follows. Fructose-bisphosphatase hydrolyzing fructose-2,6-bisphosphate as well as fructose-1,6-bisphosphate. Acts as a negative regulator of glycolysis by lowering intracellular levels of fructose-2,6-bisphosphate in a p53/TP53-dependent manner, resulting in the pentose phosphate pathway (PPP) activation and NADPH production. Contributes to the generation of reduced glutathione to cause a decrease in intracellular reactive oxygen species (ROS) content, correlating with its ability to protect cells from oxidative or metabolic stress-induced cell death. Plays a role in promoting protection against cell death during hypoxia by decreasing mitochondria ROS levels in a HK2-dependent manner through a mechanism that is independent of its fructose-bisphosphatase activity. In response to cardiac damage stress, mediates p53-induced inhibition of myocyte mitophagy through ROS levels reduction and the subsequent inactivation of BNIP3. Reduced mitophagy results in an enhanced apoptotic myocyte cell death, and exacerbates cardiac damage. Plays a role in adult intestinal regeneration; contributes to the growth, proliferation and survival of intestinal crypts following tissue ablation. Plays a neuroprotective role against ischemic brain damage by enhancing PPP flux and preserving mitochondria functions. Protects glioma cells from hypoxia- and ROS-induced cell death by inhibiting glycolysis and activating mitochondrial energy metabolism and oxygen consumption in a TKTL1-dependent and p53/TP53-independent manner. Plays a role in cancer cell survival by promoting DNA repair through activating PPP flux in a CDK5-ATM-dependent signaling pathway during hypoxia and/or genome stress-induced DNA damage responses. Involved in intestinal tumor progression. The protein is Fructose-2,6-bisphosphatase TIGAR of Bos taurus (Bovine).